We begin with the raw amino-acid sequence, 311 residues long: 4-hydroxy-tetrahydrodipicolinate synthase (311 aa).

Thr51 contributes to the pyruvate binding site. The active-site Proton donor/acceptor is Tyr140. Lys168 functions as the Schiff-base intermediate with substrate in the catalytic mechanism. Ile209 serves as a coordination point for pyruvate.

The protein belongs to the DapA family. Homotetramer; dimer of dimers.

The protein resides in the cytoplasm. It carries out the reaction L-aspartate 4-semialdehyde + pyruvate = (2S,4S)-4-hydroxy-2,3,4,5-tetrahydrodipicolinate + H2O + H(+). The protein operates within amino-acid biosynthesis; L-lysine biosynthesis via DAP pathway; (S)-tetrahydrodipicolinate from L-aspartate: step 3/4. Its function is as follows. Catalyzes the condensation of (S)-aspartate-beta-semialdehyde [(S)-ASA] and pyruvate to 4-hydroxy-tetrahydrodipicolinate (HTPA). This is 4-hydroxy-tetrahydrodipicolinate synthase from Streptococcus gordonii (strain Challis / ATCC 35105 / BCRC 15272 / CH1 / DL1 / V288).